Here is a 185-residue protein sequence, read N- to C-terminus: Dihydrofolate reductase (185 aa).

Residues 5–184 (KLNLIAAACD…ISYYFRVYKK (180 aa)) enclose the DHFR domain. NADP(+)-binding positions include A11 and 17–23 (GIGVNGA). 31–36 (EMAYFT) serves as a coordination point for substrate. An NADP(+)-binding site is contributed by 55–57 (RRT). R71 is a binding site for substrate. Residues 77–79 (THN) and 117–124 (GGSSIYRA) contribute to the NADP(+) site.

The protein belongs to the dihydrofolate reductase family.

It catalyses the reaction (6S)-5,6,7,8-tetrahydrofolate + NADP(+) = 7,8-dihydrofolate + NADPH + H(+). The protein operates within cofactor biosynthesis; tetrahydrofolate biosynthesis; 5,6,7,8-tetrahydrofolate from 7,8-dihydrofolate: step 1/1. Its activity is regulated as follows. Activated by dithiothreitol and p-chloromercuribenzoate. Inhibited by trimethoprim, methotrexate, sodium tetrathionate and hydroxymercuribenzoate. In terms of biological role, key enzyme in folate metabolism. Catalyzes an essential reaction for de novo glycine and purine synthesis, and for DNA precursor synthesis. This is Dihydrofolate reductase (DHFR) from Heliothis virescens (Tobacco budworm moth).